The primary structure comprises 448 residues: Homogentisate 1,2-dioxygenase (448 aa).

The Proton acceptor role is filled by His302. Fe cation contacts are provided by His345 and Glu351. Homogentisate-binding residues include Tyr360 and His381. His381 contributes to the Fe cation binding site.

This sequence belongs to the homogentisate dioxygenase family. In terms of assembly, hexamer; dimer of trimers. The cofactor is Fe cation.

The catalysed reaction is homogentisate + O2 = 4-maleylacetoacetate + H(+). Its pathway is amino-acid degradation; L-phenylalanine degradation; acetoacetate and fumarate from L-phenylalanine: step 4/6. Functionally, involved in the catabolism of homogentisate (2,5-dihydroxyphenylacetate or 2,5-OH-PhAc), a central intermediate in the degradation of phenylalanine and tyrosine. Catalyzes the oxidative ring cleavage of the aromatic ring of homogentisate to yield maleylacetoacetate. The protein is Homogentisate 1,2-dioxygenase of Ralstonia pickettii (strain 12J).